Here is a 1062-residue protein sequence, read N- to C-terminus: Inversin (1062 aa).

ANK repeat units lie at residues serine 13 to aspartate 42, phenylalanine 47 to lysine 76, serine 80 to lysine 110, glutamate 113 to threonine 144, asparagine 148 to isoleucine 177, glutamate 181 to leucine 213, glutamate 220 to serine 250, leucine 254 to isoleucine 283, glutamine 288 to aspartate 317, glutamate 321 to isoleucine 350, tyrosine 356 to alanine 385, methionine 389 to leucine 418, aspartate 422 to valine 451, alanine 455 to isoleucine 484, glutamate 488 to glutamine 517, and glutamate 523 to alanine 553. Position 75 is a 3-hydroxyasparagine (asparagine 75). Positions arginine 490 to asparagine 498 match the D-box 1 motif. In terms of domain architecture, IQ 1 spans glutamine 555–lysine 584. Residues arginine 589 to glutamine 608 are compositionally biased toward basic and acidic residues. A disordered region spans residues arginine 589 to serine 849. Composition is skewed to polar residues over residues glutamine 636–serine 658 and glutamine 676–arginine 689. The segment covering lysine 690–arginine 700 has biased composition (basic and acidic residues). A compositionally biased stretch (polar residues) spans glycine 713–serine 724. 2 stretches are compositionally biased toward basic and acidic residues: residues valine 725–glutamate 741 and aspartate 775–alanine 788. Residues arginine 907 to asparagine 915 carry the D-box 2 motif. The 30-residue stretch at lysine 914–leucine 943 folds into the IQ 2 domain. The disordered stretch occupies residues arginine 1042–leucine 1062. Positions phenylalanine 1046–leucine 1062 are enriched in polar residues.

Interacts with microtubules. Interacts with NPHP1. Interacts with DVL1, PRICKLE (PRICKLE1 or PRICKLE2) and Strabismus (VANGL1 or VANGL2). Binds calmodulin via its IQ domains. Interacts with APC2. Interacts with alpha-, beta-, and gamma-catenin. Interacts with N-cadherin (CDH2). Interacts with NPHP3. Interacts with IQCB1; the interaction likely requires additional interactors. Component of a complex containing at least ANKS6, INVS, NEK8 and NPHP3. ANKS6 may organize complex assembly by linking INVS and NPHP3 to NEK8 and INVS may target the complex to the proximal ciliary axoneme. In terms of processing, may be ubiquitinated via its interaction with APC2. Post-translationally, hydroxylated at Asn-75, most probably by HIF1AN. As to expression, strongly expressed in the primary cilia of renal cells, especially in the varicosities, swellings observed in the cilia. Localizes in the node monocilia and in other 9+0 monocilia, including those of kidney epithelial cells and the pituitary gland, but it does not localize to 9+2 cilia (at protein level). In adult, it is expressed at high level in liver and kidney. Weakly or not expressed in other tissues.

The protein localises to the cytoplasm. It is found in the cytoskeleton. The protein resides in the membrane. It localises to the nucleus. Its subcellular location is the perinuclear region. The protein localises to the spindle. In terms of biological role, required for normal renal development and establishment of left-right axis. Probably acts as a molecular switch between different Wnt signaling pathways. Inhibits the canonical Wnt pathway by targeting cytoplasmic disheveled (DVL1) for degradation by the ubiquitin-proteasome. This suggests that it is required in renal development to oppose the repression of terminal differentiation of tubular epithelial cells by Wnt signaling. Involved in the organization of apical junctions in kidney cells together with NPHP1, NPHP4 and RPGRIP1L/NPHP8. Does not seem to be strictly required for ciliogenesis. This is Inversin (Invs) from Mus musculus (Mouse).